Reading from the N-terminus, the 267-residue chain is 2-keto-3-deoxy-L-rhamnonate aldolase (267 aa).

His-49 functions as the Proton acceptor in the catalytic mechanism. Gln-151 contributes to the substrate binding site. Glu-153 contributes to the Mg(2+) binding site. 2 residues coordinate substrate: Ala-178 and Asp-179. Asp-179 provides a ligand contact to Mg(2+).

The protein belongs to the HpcH/HpaI aldolase family. KDR aldolase subfamily. In terms of assembly, homohexamer. Requires Mg(2+) as cofactor.

It catalyses the reaction 2-dehydro-3-deoxy-L-rhamnonate = (S)-lactaldehyde + pyruvate. Catalyzes the reversible retro-aldol cleavage of 2-keto-3-deoxy-L-rhamnonate (KDR) to pyruvate and lactaldehyde. The polypeptide is 2-keto-3-deoxy-L-rhamnonate aldolase (Shigella boydii serotype 4 (strain Sb227)).